The following is a 275-amino-acid chain: Large ribosomal subunit protein uL2c (275 aa).

2 disordered regions span residues proline 29 to arginine 60 and methionine 225 to histidine 252. Residues serine 51–arginine 60 show a composition bias toward basic residues.

It belongs to the universal ribosomal protein uL2 family. Part of the 50S ribosomal subunit.

It localises to the plastid. The protein localises to the chloroplast. This Chlorokybus atmophyticus (Soil alga) protein is Large ribosomal subunit protein uL2c (rpl2).